The sequence spans 47 residues: uncharacterized protein (47 aa).

Positions 1–18 (MKKWLLIIAGALIISACA) are cleaved as a signal peptide. The segment at 28 to 47 (EGSHSGVKFDKDSRQWGLNQ) is disordered.

This is an uncharacterized protein from Haemophilus influenzae (strain ATCC 51907 / DSM 11121 / KW20 / Rd).